The following is a 75-amino-acid chain: Small ribosomal subunit protein bS18c (75 aa).

The protein belongs to the bacterial ribosomal protein bS18 family. As to quaternary structure, part of the 30S ribosomal subunit.

The protein resides in the plastid. The protein localises to the chloroplast. The chain is Small ribosomal subunit protein bS18c from Psilotum nudum (Whisk fern).